We begin with the raw amino-acid sequence, 217 residues long: Snake venom metalloproteinase lebetase-4 (217 aa).

The propeptide occupies Ser1–Glu14. At Gln15 the chain carries Pyrrolidone carboxylic acid. One can recognise a Peptidase M12B domain in the interval Arg21–Pro217. The Ca(2+) site is built by Glu24 and Asp108. 3 disulfide bridges follow: Cys132/Cys212, Cys172/Cys196, and Cys174/Cys179. His157 contributes to the Zn(2+) binding site. Glu158 is an active-site residue. His161 and His167 together coordinate Zn(2+). Ca(2+) contacts are provided by Cys212 and Asn215.

It belongs to the venom metalloproteinase (M12B) family. P-I subfamily. Monomer. It depends on Zn(2+) as a cofactor. Expressed by the venom gland.

Its subcellular location is the secreted. Its activity is regulated as follows. Fibrinolytic and caseinolytic activities are inhibited by Cd(2+), Cu(2+) and Co(2+) ions. Not inhibited by Mg(2+), Ca(2+) and Ba(2+). Also inhibited by EDTA, EGTA and 1,10-phenanthroline. In terms of biological role, snake venom zinc metalloprotease that hydrolyzes the Aalpha-chain and more slowly the Bbeta-chain of fibrin and fibrinogen. Also hydrolyzes casein and B-chain of oxidized insulin. Its fibrinolytic activity is direct, without any plasminogen activation. Inhibits ADP-induced and collagen-induced platelet aggregation. Shows low hemorrhagic activity. Cleaves the plasma proteinase inhibitors alpha(2)-macroglobulin (A2M) and alpha(2)M-related pregnancy zone protein (PZP), and is inhibited by them. The protein is Snake venom metalloproteinase lebetase-4 of Macrovipera lebetinus (Levantine viper).